Reading from the N-terminus, the 419-residue chain is Phosphatidylcholine:ceramide cholinephosphotransferase 1 (419 aa).

Residues 13 to 76 (WSPKKVADWL…LDMIETLKME (64 aa)) form the SAM domain. Ser14 is modified (phosphoserine). A run of 5 helical transmembrane segments spans residues 142–162 (LLAF…ISVV), 190–210 (FSIC…QWLL), 221–241 (FFCI…VTTL), 282–302 (MCGD…YLFI), and 310–330 (LWWY…CILL). Residue His291 is part of the active site. At 331–419 (AHDHYTVDVV…VKYSRLVNDT (89 aa)) the chain is on the cytoplasmic side. Active-site residues include His334 and Asp338.

It belongs to the sphingomyelin synthase family.

It is found in the golgi apparatus membrane. It catalyses the reaction an N-acylsphing-4-enine + a 1,2-diacyl-sn-glycero-3-phosphocholine = a sphingomyelin + a 1,2-diacyl-sn-glycerol. The enzyme catalyses 1-(9Z-octadecenoyl)-2-acyl-sn-3-glycerol + a sphingomyelin = a 1-(9Z-octadecenoyl)-2-acyl-sn-glycero-3-phosphocholine + an N-acylsphing-4-enine. The catalysed reaction is N-hexadecanoylsphinganine + a 1,2-diacyl-sn-glycero-3-phosphocholine = N-hexadecanoyl-sphinganine-1-phosphocholine + a 1,2-diacyl-sn-glycerol. It carries out the reaction N-hexadecanoyl-(4R)-hydroxysphinganine + a 1,2-diacyl-sn-glycero-3-phosphocholine = N-hexadecanoyl-(4R)-hydroxysphinganine-phosphocholine + a 1,2-diacyl-sn-glycerol. It catalyses the reaction an N-acylsphing-4-enine + a 1,2-diacyl-sn-glycero-3-phosphoethanolamine = an N-acylsphing-4-enine 1-phosphoethanolamine + a 1,2-diacyl-sn-glycerol. It participates in sphingolipid metabolism. In terms of biological role, major sphingomyelin synthase at the Golgi apparatus. Catalyzes the reversible transfer of phosphocholine moiety in sphingomyelin biosynthesis: in the forward reaction transfers phosphocholine head group of phosphatidylcholine (PC) on to ceramide (CER) to form ceramide phosphocholine (sphingomyelin, SM) and diacylglycerol (DAG) as by-product, and in the reverse reaction transfers phosphocholine from SM to DAG to form PC and CER. The direction of the reaction depends on the levels of CER and DAG in Golgi membranes. Converts the newly synthesized CER, that is transported from the endoplasmic reticulum to the trans-Golgi by the Cer transport protein (CERT), to SM. Can form a heteromeric complex with glucosylceramide synthase (GCS) increasing SMS activity and reducing glucosylceramide synthesis, a critical mechanism that controls the metabolic fate of CER in the Golgi. Does not use free phosphorylcholine or CDP-choline as donor. Can also transfer phosphoethanolamine head group of phosphatidylethanolamine (PE) on to CER to form ceramide phosphoethanolamine (CPE). Regulates receptor-mediated signal transduction via mitogenic DAG and proapoptotic CER, as well as via SM, a structural component of membrane rafts that serve as platforms for signal transduction and protein sorting. Plays a role in secretory transport via regulation of DAG pool at the Golgi apparatus and its downstream effects on PRKD1. This is Phosphatidylcholine:ceramide cholinephosphotransferase 1 (Sgms1) from Rattus norvegicus (Rat).